Here is a 378-residue protein sequence, read N- to C-terminus: Flagellin E (378 aa).

2 coiled-coil regions span residues 98 to 139 (QSAN…KLLN) and 311 to 339 (MQNR…IKDA).

This sequence belongs to the bacterial flagellin family. In terms of assembly, heteromer of multiple flagellin subunits including FlaA, FlaB, FlaC, FlaD and FlaE.

Its subcellular location is the secreted. It localises to the bacterial flagellum. Flagellin is the subunit protein which polymerizes to form the filaments of bacterial flagella. FlaE is not essential for flagellar synthesis and motility. In Vibrio cholerae serotype O1 (strain ATCC 39541 / Classical Ogawa 395 / O395), this protein is Flagellin E (flaE).